Here is a 546-residue protein sequence, read N- to C-terminus: Arginine--tRNA ligase (546 aa).

The 'HIGH' region motif lies at 122-132; sequence ANPTGPFTVGH.

Belongs to the class-I aminoacyl-tRNA synthetase family. Monomer.

It localises to the cytoplasm. The catalysed reaction is tRNA(Arg) + L-arginine + ATP = L-arginyl-tRNA(Arg) + AMP + diphosphate. This Thermotoga petrophila (strain ATCC BAA-488 / DSM 13995 / JCM 10881 / RKU-1) protein is Arginine--tRNA ligase.